A 290-amino-acid chain; its full sequence is Large ribosomal subunit protein uL3 (290 aa).

Gln152 carries the N5-methylglutamine modification. Positions Ala250–Glu290 are disordered. The segment covering Glu255–Glu274 has biased composition (low complexity).

It belongs to the universal ribosomal protein uL3 family. In terms of assembly, part of the 50S ribosomal subunit. Forms a cluster with proteins L14 and L19. Methylated by PrmB.

One of the primary rRNA binding proteins, it binds directly near the 3'-end of the 23S rRNA, where it nucleates assembly of the 50S subunit. This is Large ribosomal subunit protein uL3 from Jannaschia sp. (strain CCS1).